Here is a 149-residue protein sequence, read N- to C-terminus: Nucleoside diphosphate kinase (149 aa).

ATP is bound by residues K9, F57, R85, T91, R102, and N112. The active-site Pros-phosphohistidine intermediate is the H115.

This sequence belongs to the NDK family. In terms of assembly, homotetramer. Requires Mg(2+) as cofactor.

The protein localises to the cytoplasm. The catalysed reaction is a 2'-deoxyribonucleoside 5'-diphosphate + ATP = a 2'-deoxyribonucleoside 5'-triphosphate + ADP. The enzyme catalyses a ribonucleoside 5'-diphosphate + ATP = a ribonucleoside 5'-triphosphate + ADP. Its function is as follows. Major role in the synthesis of nucleoside triphosphates other than ATP. The ATP gamma phosphate is transferred to the NDP beta phosphate via a ping-pong mechanism, using a phosphorylated active-site intermediate. In Roseiflexus castenholzii (strain DSM 13941 / HLO8), this protein is Nucleoside diphosphate kinase.